Reading from the N-terminus, the 687-residue chain is Translation initiation factor IF-2 (687 aa).

Residues 186–355 (KRPPIVTVMG…LLTAEMLELK (170 aa)) form the tr-type G domain. A G1 region spans residues 195–202 (GHVDHGKT). GTP is bound at residue 195–202 (GHVDHGKT). The segment at 220-224 (GITQH) is G2. The tract at residues 241–244 (DTPG) is G3. Residues 241–245 (DTPGH) and 295–298 (NKID) each bind GTP. A G4 region spans residues 295–298 (NKID). The segment at 331 to 333 (SAK) is G5.

It belongs to the TRAFAC class translation factor GTPase superfamily. Classic translation factor GTPase family. IF-2 subfamily.

It localises to the cytoplasm. One of the essential components for the initiation of protein synthesis. Protects formylmethionyl-tRNA from spontaneous hydrolysis and promotes its binding to the 30S ribosomal subunits. Also involved in the hydrolysis of GTP during the formation of the 70S ribosomal complex. The sequence is that of Translation initiation factor IF-2 from Clostridium botulinum (strain Alaska E43 / Type E3).